A 276-amino-acid polypeptide reads, in one-letter code: Large ribosomal subunit protein uL2 (276 aa).

A disordered region spans residues 218-276 (PYVRGSAMNPVDHPHGGGEGRAPIGRPAPSTPWGKPALGLKTRKKNKKSNKYIVRRRKK). Over residues 258-276 (KTRKKNKKSNKYIVRRRKK) the composition is skewed to basic residues.

It belongs to the universal ribosomal protein uL2 family. In terms of assembly, part of the 50S ribosomal subunit. Forms a bridge to the 30S subunit in the 70S ribosome.

Its function is as follows. One of the primary rRNA binding proteins. Required for association of the 30S and 50S subunits to form the 70S ribosome, for tRNA binding and peptide bond formation. It has been suggested to have peptidyltransferase activity; this is somewhat controversial. Makes several contacts with the 16S rRNA in the 70S ribosome. In Finegoldia magna (strain ATCC 29328 / DSM 20472 / WAL 2508) (Peptostreptococcus magnus), this protein is Large ribosomal subunit protein uL2.